We begin with the raw amino-acid sequence, 308 residues long: Ribonuclease Z (308 aa).

Residues histidine 60, histidine 62, aspartate 64, histidine 65, histidine 140, aspartate 209, and histidine 269 each coordinate Zn(2+). Aspartate 64 (proton acceptor) is an active-site residue.

The protein belongs to the RNase Z family. Homodimer. Zn(2+) serves as cofactor.

It carries out the reaction Endonucleolytic cleavage of RNA, removing extra 3' nucleotides from tRNA precursor, generating 3' termini of tRNAs. A 3'-hydroxy group is left at the tRNA terminus and a 5'-phosphoryl group is left at the trailer molecule.. Zinc phosphodiesterase, which displays some tRNA 3'-processing endonuclease activity. Probably involved in tRNA maturation, by removing a 3'-trailer from precursor tRNA. This is Ribonuclease Z from Methanococcus maripaludis (strain DSM 14266 / JCM 13030 / NBRC 101832 / S2 / LL).